The following is a 389-amino-acid chain: Protein DDI1 homolog 1 (389 aa).

Residues 109–132 form a disordered region; that stretch reads SSSSAQSAQRTRRVEQDDEGEKSM. The active site involves aspartate 261.

The protein belongs to the DDI1 family. Expressed in most tissues.

The protein localises to the cytoplasm. Its subcellular location is the nucleus. In terms of biological role, aspartic protease. Required for the cleavage and activation of transcription factors such as isoform a of the transcription factor skn-1, which in turn regulates the expression of proteasomal subunits such as rpt-3. Plays a key role in the degradation of the potassium channel slo-1, perhaps acting directly, in cleaving slo-1 upstream of the ER-associated degradation pathway (ERAD), and also indirectly, via activation of the transcription factor skn-1, which mediates proteasomal homeostasis. This chain is Protein DDI1 homolog 1, found in Caenorhabditis elegans.